Reading from the N-terminus, the 166-residue chain is Large ribosomal subunit protein uL10 (166 aa).

It belongs to the universal ribosomal protein uL10 family. In terms of assembly, part of the ribosomal stalk of the 50S ribosomal subunit. The N-terminus interacts with L11 and the large rRNA to form the base of the stalk. The C-terminus forms an elongated spine to which L12 dimers bind in a sequential fashion forming a multimeric L10(L12)X complex.

Forms part of the ribosomal stalk, playing a central role in the interaction of the ribosome with GTP-bound translation factors. In Streptococcus pyogenes serotype M28 (strain MGAS6180), this protein is Large ribosomal subunit protein uL10.